The chain runs to 439 residues: Orphan methyltransferase M.SPRI (439 aa).

One can recognise an SAM-dependent MTase C5-type domain in the interval 4 to 436 (LRVMSLFSGI…KELIHTYINK (433 aa)). The active site involves C78.

It belongs to the class I-like SAM-binding methyltransferase superfamily. C5-methyltransferase family. Monomer.

It carries out the reaction a 2'-deoxycytidine in DNA + S-adenosyl-L-methionine = a 5-methyl-2'-deoxycytidine in DNA + S-adenosyl-L-homocysteine + H(+). A methyltransferase that methylates the C-1 in the sequence 5'-GGCC-3' and both cytosines in the sequence 5'-CCGG-3'. A methyltransferase that methylates C-3 within the sequence 5'-GGCC-3', C-1 in 5'-CCGG-3' and C-2 in 5'-CCWGG-3'. Modification confers resistance against restriction enzymes that recognize these sequences. The sequence is that of Orphan methyltransferase M.SPRI from Bacillus phage SPR (Bacteriophage SPR).